A 103-amino-acid polypeptide reads, in one-letter code: Large ribosomal subunit protein uL23 (103 aa).

This sequence belongs to the universal ribosomal protein uL23 family. Part of the 50S ribosomal subunit. Contacts protein L29, and trigger factor when it is bound to the ribosome.

Its function is as follows. One of the early assembly proteins it binds 23S rRNA. One of the proteins that surrounds the polypeptide exit tunnel on the outside of the ribosome. Forms the main docking site for trigger factor binding to the ribosome. This Chlorobium chlorochromatii (strain CaD3) protein is Large ribosomal subunit protein uL23.